The sequence spans 116 residues: Ribosome-binding factor A (116 aa).

Belongs to the RbfA family. In terms of assembly, monomer. Binds 30S ribosomal subunits, but not 50S ribosomal subunits or 70S ribosomes.

It is found in the cytoplasm. Functionally, one of several proteins that assist in the late maturation steps of the functional core of the 30S ribosomal subunit. Associates with free 30S ribosomal subunits (but not with 30S subunits that are part of 70S ribosomes or polysomes). Required for efficient processing of 16S rRNA. May interact with the 5'-terminal helix region of 16S rRNA. The sequence is that of Ribosome-binding factor A from Pediococcus pentosaceus (strain ATCC 25745 / CCUG 21536 / LMG 10740 / 183-1w).